A 160-amino-acid polypeptide reads, in one-letter code: Nucleotide-binding protein Patl_4311 (160 aa).

Belongs to the YajQ family.

Functionally, nucleotide-binding protein. This is Nucleotide-binding protein Patl_4311 from Pseudoalteromonas atlantica (strain T6c / ATCC BAA-1087).